The following is a 306-amino-acid chain: tRNA dimethylallyltransferase 2 (306 aa).

11 to 18 (GPTASGKT) is a binding site for ATP. 13-18 (TASGKT) is a binding site for substrate. The segment at 36–39 (DSRQ) is interaction with substrate tRNA.

The protein belongs to the IPP transferase family. As to quaternary structure, monomer. Mg(2+) is required as a cofactor.

It carries out the reaction adenosine(37) in tRNA + dimethylallyl diphosphate = N(6)-dimethylallyladenosine(37) in tRNA + diphosphate. In terms of biological role, catalyzes the transfer of a dimethylallyl group onto the adenine at position 37 in tRNAs that read codons beginning with uridine, leading to the formation of N6-(dimethylallyl)adenosine (i(6)A). The chain is tRNA dimethylallyltransferase 2 from Bacteroides fragilis (strain ATCC 25285 / DSM 2151 / CCUG 4856 / JCM 11019 / LMG 10263 / NCTC 9343 / Onslow / VPI 2553 / EN-2).